The sequence spans 602 residues: Raftlin (602 aa).

Gly2 is lipidated: N-myristoyl glycine. A lipid anchor (S-palmitoyl cysteine) is attached at Cys3. Polar residues predominate over residues 178-195 (TPASNNSVQSRDNKNVSN). Disordered stretches follow at residues 178–282 (TPAS…RCSK), 451–495 (KKES…EVTE), and 524–567 (NETA…QSAP). 2 stretches are compositionally biased toward basic and acidic residues: residues 197–209 (PEDH…EKID) and 244–265 (PDCK…REAP). The span at 468–477 (KPMKKSRKTK) shows a compositional bias: basic residues.

This sequence belongs to the raftlin family.

Its subcellular location is the cell membrane. Its function is as follows. May play a pivotal role in the formation and/or maintenance of lipid rafts. May regulate B-cell antigen receptor-mediated signaling. The chain is Raftlin (RFTN1) from Gallus gallus (Chicken).